Consider the following 513-residue polypeptide: 2-isopropylmalate synthase (513 aa).

In terms of domain architecture, Pyruvate carboxyltransferase spans V7–F269. D16, H204, H206, and N240 together coordinate Mn(2+). Positions A393–L513 are regulatory domain.

Belongs to the alpha-IPM synthase/homocitrate synthase family. LeuA type 1 subfamily. In terms of assembly, homodimer. Requires Mn(2+) as cofactor.

The protein localises to the cytoplasm. The enzyme catalyses 3-methyl-2-oxobutanoate + acetyl-CoA + H2O = (2S)-2-isopropylmalate + CoA + H(+). It participates in amino-acid biosynthesis; L-leucine biosynthesis; L-leucine from 3-methyl-2-oxobutanoate: step 1/4. Functionally, catalyzes the condensation of the acetyl group of acetyl-CoA with 3-methyl-2-oxobutanoate (2-ketoisovalerate) to form 3-carboxy-3-hydroxy-4-methylpentanoate (2-isopropylmalate). This Solidesulfovibrio magneticus (strain ATCC 700980 / DSM 13731 / RS-1) (Desulfovibrio magneticus) protein is 2-isopropylmalate synthase.